A 225-amino-acid chain; its full sequence is Thaumatin-like protein (225 aa).

A signal peptide spans 1 to 24 (MSTFKSLSLSALLFIAFLFTCARG). 8 cysteine pairs are disulfide-bonded: Cys-33/Cys-224, Cys-74/Cys-84, Cys-89/Cys-95, Cys-140/Cys-213, Cys-146/Cys-196, Cys-154/Cys-164, Cys-168/Cys-177, and Cys-178/Cys-183.

It belongs to the thaumatin family. In terms of processing, N-glycosylated.

It is found in the secreted. Its function is as follows. Has antifungal activity against B.cinerea, C.comatus, M.arachidicola, P.piricola, C.albicans and S.carlsbergensis. Inhibits HIV-1 reverse transcriptase. This Actinidia chinensis var. chinensis (Chinese soft-hair kiwi) protein is Thaumatin-like protein.